The primary structure comprises 208 residues: Uracil phosphoribosyltransferase (208 aa).

5-phospho-alpha-D-ribose 1-diphosphate is bound by residues arginine 78, arginine 103, and 130–138; that span reads DPMLATGGS. Uracil is bound by residues isoleucine 193 and 198–200; that span reads GDA. Aspartate 199 serves as a coordination point for 5-phospho-alpha-D-ribose 1-diphosphate.

Belongs to the UPRTase family. Requires Mg(2+) as cofactor.

It carries out the reaction UMP + diphosphate = 5-phospho-alpha-D-ribose 1-diphosphate + uracil. It functions in the pathway pyrimidine metabolism; UMP biosynthesis via salvage pathway; UMP from uracil: step 1/1. Its activity is regulated as follows. Allosterically activated by GTP. Functionally, catalyzes the conversion of uracil and 5-phospho-alpha-D-ribose 1-diphosphate (PRPP) to UMP and diphosphate. The sequence is that of Uracil phosphoribosyltransferase from Psychromonas ingrahamii (strain DSM 17664 / CCUG 51855 / 37).